The sequence spans 868 residues: DNA mismatch repair protein MutS (868 aa).

623–630 (GPNMAGKS) contributes to the ATP binding site.

The protein belongs to the DNA mismatch repair MutS family.

This protein is involved in the repair of mismatches in DNA. It is possible that it carries out the mismatch recognition step. This protein has a weak ATPase activity. This chain is DNA mismatch repair protein MutS, found in Magnetococcus marinus (strain ATCC BAA-1437 / JCM 17883 / MC-1).